We begin with the raw amino-acid sequence, 475 residues long: MVSTTKSTGSVTQIIGPVLDIAFPNGQLPKVFNALKVQSSEGTITCEVQQLLGDNKVRAVSMSSTEGLQRGVEVIDTGSPISVPVGTDTLGRIFNVLGEPVDNLGPVDSESTLPIHRPAPAFTKLETKPNIFETGIKVVDLLAPYRRGGKIGLFGGAGVGKTVLIMELINNIAKAHGGVSVFGGVGERTREGNDLYMEMKESKVIDADNLKESKVALVYGQMNEPPGARMRVGLTALTMAEYFRDINKQDVLLFIDNIFRFVQAGSEVSALLGRMPSAVGYQPTLATEMGALQERITSTTEGSITSIQAVYVPADDLTDPVPATTFAHLDATTVLSRNLAAKGIYPAVDPLDSTSTMLQPGIVGTEHYSTAQEVKSTLQRYKELQDIIAILGLDELSEEDRQTVSRARKIERFLSQPFFVAEVFTGSPGKYVSLEDAIKGFQMILKGNLDDLPEQAFYLVGDIDEAIQKADSMKD.

155–162 (GGAGVGKT) is a binding site for ATP.

It belongs to the ATPase alpha/beta chains family. As to quaternary structure, F-type ATPases have 2 components, CF(1) - the catalytic core - and CF(0) - the membrane proton channel. CF(1) has five subunits: alpha(3), beta(3), gamma(1), delta(1), epsilon(1). CF(0) has four main subunits: a(1), b(1), b'(1) and c(9-12).

It localises to the plastid. Its subcellular location is the chloroplast thylakoid membrane. It catalyses the reaction ATP + H2O + 4 H(+)(in) = ADP + phosphate + 5 H(+)(out). Its function is as follows. Produces ATP from ADP in the presence of a proton gradient across the membrane. The catalytic sites are hosted primarily by the beta subunits. This chain is ATP synthase subunit beta, chloroplastic, found in Pyropia yezoensis (Susabi-nori).